A 398-amino-acid chain; its full sequence is CCA-adding enzyme (398 aa).

Residues glycine 32 and arginine 35 each coordinate ATP. Glycine 32 and arginine 35 together coordinate CTP. Mg(2+)-binding residues include aspartate 45 and aspartate 47. ATP is bound by residues arginine 119, aspartate 162, arginine 165, arginine 168, and arginine 171. CTP-binding residues include arginine 119, aspartate 162, arginine 165, arginine 168, and arginine 171.

Belongs to the tRNA nucleotidyltransferase/poly(A) polymerase family. Bacterial CCA-adding enzyme type 3 subfamily. As to quaternary structure, homodimer. It depends on Mg(2+) as a cofactor.

The catalysed reaction is a tRNA precursor + 2 CTP + ATP = a tRNA with a 3' CCA end + 3 diphosphate. The enzyme catalyses a tRNA with a 3' CCA end + 2 CTP + ATP = a tRNA with a 3' CCACCA end + 3 diphosphate. Functionally, catalyzes the addition and repair of the essential 3'-terminal CCA sequence in tRNAs without using a nucleic acid template. Adds these three nucleotides in the order of C, C, and A to the tRNA nucleotide-73, using CTP and ATP as substrates and producing inorganic pyrophosphate. tRNA 3'-terminal CCA addition is required both for tRNA processing and repair. Also involved in tRNA surveillance by mediating tandem CCA addition to generate a CCACCA at the 3' terminus of unstable tRNAs. While stable tRNAs receive only 3'-terminal CCA, unstable tRNAs are marked with CCACCA and rapidly degraded. The polypeptide is CCA-adding enzyme (Lactococcus lactis subsp. lactis (strain IL1403) (Streptococcus lactis)).